We begin with the raw amino-acid sequence, 178 residues long: MSRIGRLPIPVPSGVDITVEGATITVKGPKGTLSHVVAEPIVVNTEDGRLLVTRPDDERRSRSLHGLTRTLVSNMVTGVTAGYSKTLEIVGVGYRVQAKGSDLEFALGYSHPVPVKAPEGIRFEVQTPTRFVVHGIDKQLVGEVSAKIRGLRKPDPYKGKGVRYQGEVVRRKVGKTGK.

It belongs to the universal ribosomal protein uL6 family. Part of the 50S ribosomal subunit.

This protein binds to the 23S rRNA, and is important in its secondary structure. It is located near the subunit interface in the base of the L7/L12 stalk, and near the tRNA binding site of the peptidyltransferase center. The polypeptide is Large ribosomal subunit protein uL6 (Frankia casuarinae (strain DSM 45818 / CECT 9043 / HFP020203 / CcI3)).